The following is a 409-amino-acid chain: 3-isopropylmalate dehydrogenase 1, chloroplastic (409 aa).

The transit peptide at 1-37 (MAAFLQTNISLNAIKIVPGKYSSLTDHQFRAPYRIRC) directs the protein to the chloroplast. Phosphoserine is present on S74. An NAD(+)-binding site is contributed by 118 to 133 (IGGYKWDKNEKHLRPE). Positions 140, 150, and 178 each coordinate substrate. N238 serves as a coordination point for NAD(+). Residue D268 coordinates substrate. Mg(2+) is bound at residue D268. N269 provides a ligand contact to NAD(+). Mg(2+) contacts are provided by D292 and D296. 322–338 (EPIHGSAPDIAGQDKAN) provides a ligand contact to NAD(+).

Belongs to the isocitrate and isopropylmalate dehydrogenases family. In terms of assembly, homodimer. Mg(2+) is required as a cofactor. Mn(2+) serves as cofactor. In terms of tissue distribution, highly expressed in seedlings, leaves, stems and roots and, to a lower extent, in flowers, pollen and siliques.

The protein resides in the plastid. It localises to the chloroplast stroma. It carries out the reaction (2R,3S)-3-isopropylmalate + NAD(+) = 4-methyl-2-oxopentanoate + CO2 + NADH. It functions in the pathway amino-acid biosynthesis; L-leucine biosynthesis; L-leucine from 3-methyl-2-oxobutanoate: step 3/4. The protein operates within secondary metabolite biosynthesis. Its activity is regulated as follows. Regulated by a thiol-based redox modification; oxidation by CuCl(2) leads to a decreased activity. In terms of biological role, involved in both glucosinolate and leucine biosynthesis; catalyzes the oxidative decarboxylation step in both leucine biosynthesis (primary metabolism) and methionine chain elongation of glucosinolates (specialized metabolism). Catalyzes the oxidation of 3-carboxy-2-hydroxy-4-methylpentanoate (3-isopropylmalate, 3-IPM) to 3-carboxy-4-methyl-2-oxopentanoate. The product decarboxylates to 4-methyl-2 oxopentanoate. Required during pollen development and involved in embryo sac development. More active on 3-isopropylmalate and NAD(+) than towards D-malate. In Arabidopsis thaliana (Mouse-ear cress), this protein is 3-isopropylmalate dehydrogenase 1, chloroplastic.